Reading from the N-terminus, the 551-residue chain is GMP synthase [glutamine-hydrolyzing] (551 aa).

Positions 1 to 28 (MTSSPTAAARTEGEAAPTVPTQVESGTA) are disordered. A compositionally biased stretch (polar residues) spans 19–28 (VPTQVESGTA). Residues 37-227 (MVAILDFGSQ…VYHICGCEPE (191 aa)) form the Glutamine amidotransferase type-1 domain. Cys114 serves as the catalytic Nucleophile. Catalysis depends on residues His201 and Glu203. The region spanning 228–426 (WTTAAFIEEA…LGLPEEIVQR (199 aa)) is the GMPS ATP-PPase domain. 255–261 (SGGVDSS) serves as a coordination point for ATP.

In terms of assembly, homodimer.

The enzyme catalyses XMP + L-glutamine + ATP + H2O = GMP + L-glutamate + AMP + diphosphate + 2 H(+). The protein operates within purine metabolism; GMP biosynthesis; GMP from XMP (L-Gln route): step 1/1. Catalyzes the synthesis of GMP from XMP. The protein is GMP synthase [glutamine-hydrolyzing] of Gloeobacter violaceus (strain ATCC 29082 / PCC 7421).